An 80-amino-acid chain; its full sequence is Serine palmitoyltransferase small subunit A-A (80 aa).

Over 1–21 the chain is Cytoplasmic; the sequence is MKVLCEDVNGPRSSLGRAWSH. Residues 22–38 form a helical membrane-spanning segment; the sequence is MSWLYYQYLLVTALYML. Topologically, residues 39–43 are lumenal; the sequence is EPWER. The helical transmembrane segment at 44 to 66 threads the bilayer; sequence TVFNSMLVSIVGMALYTGYIFMP. The Cytoplasmic portion of the chain corresponds to 67-80; it reads QHILAILHYFEIVQ.

The protein belongs to the SPTSS family. SPTSSA subfamily. As to quaternary structure, component of the serine palmitoyltransferase (SPT) complex, which is composed of SPTLC1, SPTLC2 or SPTLC3 and SPTSSA or SPTSSB. The heterodimer consisting of SPTLC1 and SPTLC2/SPTLC3 forms the catalytic core of the enzyme, while SPTSSA or SPTSSB subunits determine substrate specificity. SPT also interacts with ORMDL proteins, especially ORMDL3, which negatively regulate SPT activity in the presence of ceramides.

It localises to the endoplasmic reticulum membrane. It participates in lipid metabolism; sphingolipid metabolism. Component of the serine palmitoyltransferase multisubunit enzyme (SPT) that catalyzes the initial and rate-limiting step in sphingolipid biosynthesis by condensing L-serine and activated acyl-CoA (most commonly palmitoyl-CoA) to form long-chain bases. The SPT complex is composed of SPTLC1, SPTLC2 or SPTLC3 and SPTSSA or SPTSSB. Within this complex, the heterodimer consisting of SPTLC1 and SPTLC2/SPTLC3 forms the catalytic core. Within the SPT complex, SPTSSA stimulates the catalytic activity and plays a role in substrate specificity, which depends upon the overall complex composition. The SPTLC1-SPTLC2-SPTSSA complex shows a strong preference for C16-CoA substrate, while the SPTLC1-SPTLC3-SPTSSA isozyme uses both C14-CoA and C16-CoA as substrates, with a slight preference for C14-CoA. Independently of its action as a SPT component, may be involved in MBOAT7 localization to mitochondria-associated membranes, a membrane bridge between the endoplasmic reticulum and mitochondria, may hence affect MBOAT7-catalyzed incorporation of arachidonic acid into phosphatidylinositol. The protein is Serine palmitoyltransferase small subunit A-A (sptssa-a) of Xenopus laevis (African clawed frog).